The following is a 412-amino-acid chain: Probable serine/threonine-protein kinase PBL10 (412 aa).

Gly-2 carries N-myristoyl glycine lipidation. Cys-4 carries the S-palmitoyl cysteine lipid modification. The segment at 15–45 (GASPKYMSSEANDSLGSKSSSVSIRTNPRTE) is disordered. Over residues 23 to 43 (SEANDSLGSKSSSVSIRTNPR) the composition is skewed to polar residues. Thr-58 is modified (phosphothreonine). Residues 69–356 (FRPDSVLGEG…VVSHLEHIQT (288 aa)) enclose the Protein kinase domain. ATP is bound by residues 75-83 (LGEGGFGSV) and Lys-107. Tyr-152 carries the post-translational modification Phosphotyrosine. The Proton acceptor role is filled by Asp-204. Residues Ser-208 and Ser-238 each carry the phosphoserine modification. Residues Thr-239 and Thr-244 each carry the phosphothreonine modification. Phosphotyrosine is present on Tyr-252.

Belongs to the protein kinase superfamily. Ser/Thr protein kinase family. In terms of assembly, interacts with the Xanthomonas campestris effector XopAC/AvrAC. In terms of tissue distribution, expressed in stomatal guard cells of leaves.

It is found in the cell membrane. It carries out the reaction L-seryl-[protein] + ATP = O-phospho-L-seryl-[protein] + ADP + H(+). It catalyses the reaction L-threonyl-[protein] + ATP = O-phospho-L-threonyl-[protein] + ADP + H(+). Possible bi-functional kinase. In vitro, it exhibits serine/threonine activity. In vivo, can phosphorylate tyrosine residues of limited substrates. May be involved in plant defense signaling. Required for full light-induced stomatal opening. This is Probable serine/threonine-protein kinase PBL10 from Arabidopsis thaliana (Mouse-ear cress).